The sequence spans 95 residues: Aspartyl/glutamyl-tRNA(Asn/Gln) amidotransferase subunit C (95 aa).

This sequence belongs to the GatC family. In terms of assembly, heterotrimer of A, B and C subunits.

It catalyses the reaction L-glutamyl-tRNA(Gln) + L-glutamine + ATP + H2O = L-glutaminyl-tRNA(Gln) + L-glutamate + ADP + phosphate + H(+). The catalysed reaction is L-aspartyl-tRNA(Asn) + L-glutamine + ATP + H2O = L-asparaginyl-tRNA(Asn) + L-glutamate + ADP + phosphate + 2 H(+). In terms of biological role, allows the formation of correctly charged Asn-tRNA(Asn) or Gln-tRNA(Gln) through the transamidation of misacylated Asp-tRNA(Asn) or Glu-tRNA(Gln) in organisms which lack either or both of asparaginyl-tRNA or glutaminyl-tRNA synthetases. The reaction takes place in the presence of glutamine and ATP through an activated phospho-Asp-tRNA(Asn) or phospho-Glu-tRNA(Gln). The sequence is that of Aspartyl/glutamyl-tRNA(Asn/Gln) amidotransferase subunit C from Rhizorhabdus wittichii (strain DSM 6014 / CCUG 31198 / JCM 15750 / NBRC 105917 / EY 4224 / RW1) (Sphingomonas wittichii).